The following is a 202-amino-acid chain: Transmembrane 4 L6 family member 1 (202 aa).

The Cytoplasmic portion of the chain corresponds to 1–9 (MCSSKCTRY). The chain crosses the membrane as a helical span at residues 10–30 (IGHSLVVFAVLCIVANILLYF). Over 31 to 49 (PNGETKYAYEDHLSRFVWF) the chain is Extracellular. Residues 50-70 (FAGIVGGGLLILLPAFVFLGL) traverse the membrane as a helical segment. The Cytoplasmic portion of the chain corresponds to 71-93 (EGEDCCGCWSCENYGKRCTMLSS). Residues 94–114 (IMAALIGIAGSGYCVIVAALG) form a helical membrane-spanning segment. Residues 115–161 (LAEGPKCGDSHGMWNYTFANTDGQYLLDPTTWSKCHEPNNIVEWNVT) are Extracellular-facing. N-linked (GlcNAc...) asparagine glycosylation is found at Asn129 and Asn159. A helical transmembrane segment spans residues 162 to 182 (LFSILLALGGLEFILCLIQVI). Topologically, residues 183 to 202 (NGVLEGMCSYCCSHQQQYDC) are cytoplasmic.

The protein belongs to the L6 tetraspanin family. Present in high molecular weight complexes in tumor cells. Interacts with SDCBP2.

The protein localises to the membrane. This Mesocricetus auratus (Golden hamster) protein is Transmembrane 4 L6 family member 1 (TM4SF1).